Here is a 69-residue protein sequence, read N- to C-terminus: MGKQCEVCGKKPQVGHHVSHSNIKTKRRFEPNLQSVRHQLPSGEVKTVTVCTRCLRSGAVTKPVVRKSA.

This sequence belongs to the bacterial ribosomal protein bL28 family.

This chain is Large ribosomal subunit protein bL28, found in Nitratidesulfovibrio vulgaris (strain ATCC 29579 / DSM 644 / CCUG 34227 / NCIMB 8303 / VKM B-1760 / Hildenborough) (Desulfovibrio vulgaris).